A 375-amino-acid polypeptide reads, in one-letter code: Fluoride export protein 1 (375 aa).

The Cytoplasmic portion of the chain corresponds to 1–11; that stretch reads MIFNPVISNHK. Residues 12–32 traverse the membrane as a helical segment; the sequence is LSHYIHVFCTFTTFCILGTET. The Extracellular portion of the chain corresponds to 33 to 34; the sequence is RQ. Residues 35–55 traverse the membrane as a helical segment; that stretch reads AITALSTYTPAFVTAPTVLWS. At 56–79 the chain is on the cytoplasmic side; that stretch reads NCSSCMLMGIMQSLNAYTWMKDHQ. The helical transmembrane segment at 80–100 threads the bilayer; sequence VLFLGVTTGYCGALSSFSSML. Topologically, residues 101–127 are extracellular; the sequence is LEMFEHSTNLTNGNIANHTKLPNRAYG. 2 N-linked (GlcNAc...) asparagine glycosylation sites follow: asparagine 109 and asparagine 117. A helical membrane pass occupies residues 128-148; the sequence is IMEFLSVLLVHLMVSMGSLIF. The Cytoplasmic segment spans residues 149–213; that stretch reads GRQLGKEVIV…FKKFFDIVDK (65 aa). Residues 214–234 form a helical membrane-spanning segment; the sequence is LAYALAFPLIILFVVLCAYYE. Residue asparagine 235 is glycosylated (N-linked (GlcNAc...) asparagine). Residues 235 to 241 lie on the Extracellular side of the membrane; sequence NYSRGKW. A helical membrane pass occupies residues 242 to 262; it reads TLPCLFGIFAGFLRYWLAEMF. The Cytoplasmic portion of the chain corresponds to 263–268; it reads NKTNKK. The helical transmembrane segment at 269–289 threads the bilayer; that stretch reads FPLGTFLANVFATLLIGIFTM. The Extracellular portion of the chain corresponds to 290-310; the sequence is VQRGKKHFSTDVPIVNSLNSC. A helical transmembrane segment spans residues 311-331; the sequence is HIVSALISGFCGTLSTISTFI. Over 332-338 the chain is Cytoplasmic; sequence NEGYKLS. A helical transmembrane segment spans residues 339–359; the sequence is FINMLIYYTVSIAISYCLLVI. Topologically, residues 360 to 375 are extracellular; it reads TLGSYAWTRGLTNPIC.

It belongs to the fluoride channel Fluc/FEX (TC 1.A.43) family.

It is found in the cell membrane. The catalysed reaction is fluoride(in) = fluoride(out). Functionally, fluoride channel required for the rapid expulsion of cytoplasmic fluoride. This Saccharomyces cerevisiae (strain ATCC 204508 / S288c) (Baker's yeast) protein is Fluoride export protein 1.